Here is a 676-residue protein sequence, read N- to C-terminus: Translation initiation factor IF-2, mitochondrial (676 aa).

A tr-type G domain is found at 143–326 (KRAPVVTIMG…MDIRAENSPK (184 aa)). Residues 152 to 159 (GHVDHGKT) are G1. GTP is bound at residue 152–159 (GHVDHGKT). The G2 stretch occupies residues 177–181 (GITQH). Residues 200-203 (DTPG) and 254-257 (TKID) each bind GTP. The G3 stretch occupies residues 200 to 203 (DTPG). The tract at residues 254 to 257 (TKID) is G4. Residues 296–298 (SAK) form a G5 region.

The protein belongs to the TRAFAC class translation factor GTPase superfamily. Classic translation factor GTPase family. IF-2 subfamily.

It is found in the mitochondrion. Its function is as follows. One of the essential components for the initiation of protein synthesis. Protects formylmethionyl-tRNA from spontaneous hydrolysis and promotes its binding to the 30S ribosomal subunits. Also involved in the hydrolysis of GTP during the formation of the 70S ribosomal complex. This is Translation initiation factor IF-2, mitochondrial (IFM1) from Saccharomyces cerevisiae (strain ATCC 204508 / S288c) (Baker's yeast).